A 925-amino-acid chain; its full sequence is Glutamate receptor 3.1 (925 aa).

Positions 1–25 are cleaved as a signal peptide; sequence MLSSMNWVLLSFIIVLGGGLLLSEG. Residues 26 to 591 are Extracellular-facing; it reads ASSSRPPVIK…NPWAFLRPFT (566 aa). Residues N309, N341, N359, N419, N437, and N488 are each glycosylated (N-linked (GlcNAc...) asparagine). Residues 592 to 612 form a helical membrane-spanning segment; the sequence is LPMWAVTASFFVIVGAAIWIL. Topologically, residues 613–621 are cytoplasmic; that stretch reads EHRINDEFR. Residues 622-642 form a helical membrane-spanning segment; it reads GPPRRQIITILWFTFSTMFFS. The Cytoplasmic segment spans residues 643-653; sequence HRETTVSTLGR. Residues 654-674 traverse the membrane as a helical segment; that stretch reads MVLLIWLFVVLIITSSYTASL. The Extracellular segment spans residues 675 to 831; it reads TSILTVQQLN…GDSEQLNVHS (157 aa). N738 and N812 each carry an N-linked (GlcNAc...) asparagine glycan. The chain crosses the membrane as a helical span at residues 832 to 852; the sequence is FWGMFLVVGIACLVALFIHFF. At 853–925 the chain is on the cytoplasmic side; that stretch reads KIIRDFCKDT…ISRTASRRPI (73 aa). The interval 897–925 is disordered; the sequence is KRRLKRKRNNDHSMNANSIISRTASRRPI. Residues 908 to 919 show a composition bias toward polar residues; it reads HSMNANSIISRT.

This sequence belongs to the glutamate-gated ion channel (TC 1.A.10.1) family. In terms of assembly, may form heteromers. As to expression, expressed predominantly in roots. Firt detected in the vascular tissues of the cotyledons, and later in the vasculature of all organs. In leaves, preferentially expressed in guard cells.

The protein localises to the membrane. Functionally, glutamate-gated receptor that probably acts as a non-selective cation channel. May be involved in light-signal transduction and calcium homeostasis via the regulation of calcium influx into cells. Required for the long-term calcium oscillation-regulated stomatal movements. The sequence is that of Glutamate receptor 3.1 (GLR3.1) from Arabidopsis thaliana (Mouse-ear cress).